The following is a 178-amino-acid chain: RNA pyrophosphohydrolase (178 aa).

In terms of domain architecture, Nudix hydrolase spans 18 to 171 (PYRPCVGLMV…KRKVYEQVVA (154 aa)). Residues 59-80 (GGIDKGEDPAQAALRELYEETG) carry the Nudix box motif.

Belongs to the Nudix hydrolase family. RppH subfamily. A divalent metal cation serves as cofactor.

In terms of biological role, accelerates the degradation of transcripts by removing pyrophosphate from the 5'-end of triphosphorylated RNA, leading to a more labile monophosphorylated state that can stimulate subsequent ribonuclease cleavage. This is RNA pyrophosphohydrolase from Brucella canis (strain ATCC 23365 / NCTC 10854 / RM-666).